Reading from the N-terminus, the 382-residue chain is uncharacterized protein (382 aa).

12 helical membrane passes run 8–28, 45–65, 75–95, 102–122, 131–151, 157–177, 204–224, 231–251, 270–290, 291–311, 325–345, and 349–369; these read VMLL…LNTL, MVSS…GYLI, YLAS…VGFW, FIAG…LMCS, LLAA…LLVS, LLHV…PLLF, LGVN…GLMP, GMAN…GILG, VQVF…AMAP, ALFI…AWAC, ALLL…AMLM, and SDNL…LMLL.

This sequence belongs to the major facilitator superfamily. YcaD (TC 2.A.1.26) family.

The protein localises to the cell inner membrane. This is an uncharacterized protein from Salmonella newport (strain SL254).